Here is a 340-residue protein sequence, read N- to C-terminus: DnaJ homolog subfamily B member 1 (340 aa).

The J domain occupies 2-70; the sequence is GKDYYQTLGL…REIFDRYGEE (69 aa). A Phosphothreonine modification is found at T307.

As to quaternary structure, interacts with DNAJC3. Interacts with HSF1 (via transactivation domain); this interaction results in the inhibition of heat shock- and HSF1-induced transcriptional activity during the attenuation and recovery phase period of the heat shock response. Interacts with BAG3.

It is found in the cytoplasm. Its subcellular location is the nucleus. The protein localises to the nucleolus. Interacts with HSP70 and can stimulate its ATPase activity. Stimulates the association between HSC70 and HIP. Negatively regulates heat shock-induced HSF1 transcriptional activity during the attenuation and recovery phase period of the heat shock response. Stimulates ATP hydrolysis and the folding of unfolded proteins mediated by HSPA1A/B (in vitro). The protein is DnaJ homolog subfamily B member 1 (Dnajb1) of Mus musculus (Mouse).